The primary structure comprises 249 residues: Adenosylcobinamide-GDP ribazoletransferase (249 aa).

The next 6 membrane-spanning stretches (helical) occupy residues methionine 32–glycine 52, alanine 53–isoleucine 73, isoleucine 107–leucine 127, alanine 136–proline 156, leucine 190–alanine 210, and threonine 224–valine 244.

Belongs to the CobS family. The cofactor is Mg(2+).

The protein localises to the cell membrane. The enzyme catalyses alpha-ribazole + adenosylcob(III)inamide-GDP = adenosylcob(III)alamin + GMP + H(+). The catalysed reaction is alpha-ribazole 5'-phosphate + adenosylcob(III)inamide-GDP = adenosylcob(III)alamin 5'-phosphate + GMP + H(+). The protein operates within cofactor biosynthesis; adenosylcobalamin biosynthesis; adenosylcobalamin from cob(II)yrinate a,c-diamide: step 7/7. Joins adenosylcobinamide-GDP and alpha-ribazole to generate adenosylcobalamin (Ado-cobalamin). Also synthesizes adenosylcobalamin 5'-phosphate from adenosylcobinamide-GDP and alpha-ribazole 5'-phosphate. This chain is Adenosylcobinamide-GDP ribazoletransferase, found in Herpetosiphon aurantiacus (strain ATCC 23779 / DSM 785 / 114-95).